We begin with the raw amino-acid sequence, 628 residues long: Very-long-chain aldehyde decarbonylase GL1-2 (628 aa).

The next 5 membrane-spanning stretches (helical) occupy residues G37–L57, G131–H151, V191–V211, D299–L319, and F331–S351. The Fatty acid hydroxylase domain maps to L137 to T277.

Belongs to the sterol desaturase family. Homodimer. Expressed in germinating seeds, radicals and leaves.

The protein localises to the endoplasmic reticulum membrane. The catalysed reaction is a long-chain fatty aldehyde + 2 NADPH + O2 + H(+) = a long-chain alkane + formate + 2 NADP(+) + H2O. In terms of biological role, aldehyde decarbonylase involved in the conversion of aldehydes to alkanes. Core component of a very-long-chain alkane synthesis complex. Required for the formation of wax layers conferring cuticular permeability and drought tolerance. The polypeptide is Very-long-chain aldehyde decarbonylase GL1-2 (Oryza sativa subsp. japonica (Rice)).